A 402-amino-acid polypeptide reads, in one-letter code: Phosphoglycerate kinase (402 aa).

Substrate contacts are provided by residues 21-23 (DFN), arginine 36, 59-62 (HLGR), arginine 118, and arginine 151. Residues lysine 201, glycine 293, glutamate 324, and 353-356 (GGDS) each bind ATP.

It belongs to the phosphoglycerate kinase family. Monomer.

It localises to the cytoplasm. The enzyme catalyses (2R)-3-phosphoglycerate + ATP = (2R)-3-phospho-glyceroyl phosphate + ADP. It participates in carbohydrate degradation; glycolysis; pyruvate from D-glyceraldehyde 3-phosphate: step 2/5. The polypeptide is Phosphoglycerate kinase (Thermosipho africanus (strain TCF52B)).